The following is a 113-amino-acid chain: MVAFRMMSMALLVVVASSWWASPVEAASSPRVDHRLVRRSLFDPSCTGVFDRELLGRLNRVCDDCYNVFREPKVATECRSHCFLNPAFIQCLEYIIPEVLHEEYQANVQLVGK.

The signal sequence occupies residues 1–26; the sequence is MVAFRMMSMALLVVVASSWWASPVEA. Disulfide bonds link C46–C82, C62–C78, and C65–C91. V111 bears the Valine amide mark.

The protein belongs to the arthropod CHH/MIH/GIH/VIH hormone family. In terms of tissue distribution, expressed at a constant level in the eyestalks of juveniles and mature females. A low level expression is seen in the central nervous system.

The protein localises to the secreted. Functionally, hormone found in the sinus gland of isopods and decapods which controls the blood sugar level. Has a secretagogue action over the amylase released from the midgut gland. May act as a stress hormone and may be involved in the control of molting and reproduction. The chain is Crustacean hyperglycemic hormones B from Metapenaeus ensis (Greasyback shrimp).